The primary structure comprises 128 residues: Type-4 ice-structuring protein LS-12 (128 aa).

The N-terminal stretch at Met-1–Ala-20 is a signal peptide. Gln-21 bears the Pyrrolidone carboxylic acid mark.

It belongs to the apolipoprotein A1/A4/E family.

The protein resides in the secreted. Its function is as follows. Antifreeze proteins lower the blood freezing point. The polypeptide is Type-4 ice-structuring protein LS-12 (Myoxocephalus octodecemspinosus (Longhorn sculpin)).